A 390-amino-acid chain; its full sequence is Glutamate 5-kinase (390 aa).

Residue K29 participates in ATP binding. Residues S69, D156, and N168 each coordinate substrate. An ATP-binding site is contributed by 188 to 189; sequence TD. A PUA domain is found at 295–374; that stretch reads SGSLIVDAGA…EQFDRILGNN (80 aa).

Belongs to the glutamate 5-kinase family.

Its subcellular location is the cytoplasm. It catalyses the reaction L-glutamate + ATP = L-glutamyl 5-phosphate + ADP. The protein operates within amino-acid biosynthesis; L-proline biosynthesis; L-glutamate 5-semialdehyde from L-glutamate: step 1/2. In terms of biological role, catalyzes the transfer of a phosphate group to glutamate to form L-glutamate 5-phosphate. The chain is Glutamate 5-kinase from Psychrobacter arcticus (strain DSM 17307 / VKM B-2377 / 273-4).